The chain runs to 92 residues: Small ribosomal subunit protein bS20 (92 aa).

A disordered region spans residues 1 to 23 (MANTPSAKKRAKQAEKRRSHNAS). The span at 7 to 20 (AKKRAKQAEKRRSH) shows a compositional bias: basic residues.

It belongs to the bacterial ribosomal protein bS20 family.

Binds directly to 16S ribosomal RNA. In Pseudomonas savastanoi pv. phaseolicola (strain 1448A / Race 6) (Pseudomonas syringae pv. phaseolicola (strain 1448A / Race 6)), this protein is Small ribosomal subunit protein bS20.